Reading from the N-terminus, the 106-residue chain is uncharacterized protein (106 aa).

The first 31 residues, 1–31, serve as a signal peptide directing secretion; it reads MNNERLMLKGIFLGAAAGAALSLLHKPTRQA. A coiled-coil region spans residues 57–89; it reads VITKVDEAKKLARTLSKEVDFVNQQVKELKKTT.

This is an uncharacterized protein from Bacillus subtilis (strain 168).